We begin with the raw amino-acid sequence, 58 residues long: DNA-directed RNA polymerases I, II, and III subunit RPABC4 (58 aa).

Zn(2+) is bound by residues C19, C22, C36, and C39. Residues 19–39 form a C4-type zinc finger; the sequence is CGECHTENEIKSRDPIRCREC.

The protein belongs to the archaeal Rpo12/eukaryotic RPC10 RNA polymerase subunit family. In terms of assembly, component of the RNA polymerase I (Pol I), RNA polymerase II (Pol II) and RNA polymerase III (Pol III) complexes consisting of at least 13, 12 and 17 subunits, respectively. Pol I complex consists of a ten-subunit catalytic core composed of POLR1A/RPA1, POLR1B/RPA2, POLR1C/RPAC1, POLR1D/RPAC2, POLR1H/RPA12, POLR2E/RPABC1, POLR2F/RPABC2, POLR2H/RPABC3, POLR2K/RPABC4 and POLR2L/RPABC5; a mobile stalk subunit POLR1F/RPA43 protruding from the core and additional subunits homologous to general transcription factors POLR1E/RPA49 and POLR1G/RPA34. Part of Pol I pre-initiation complex (PIC), in which Pol I core assembles with RRN3 and promoter-bound UTBF and SL1/TIF-IB complex. Pol II complex contains a ten-subunit catalytic core composed of POLR2A/RPB1, POLR2B/RPB2, POLR2C/RPB3, POLR2I/RPB9, POLR2J/RPB11, POLR2E/RPABC1, POLR2F/RPABC2, POLR2H/RPABC3, POLR2K/RPABC4 and POLR2L/RPABC5 and a mobile stalk composed of two subunits POLR2D/RPB4 and POLR2G/RPB7. Part of Pol II(G) complex, in which Pol II core associates with an additional subunit POLR2M; unlike conventional Pol II, Pol II(G) functions as a transcriptional repressor. Part of TBP-based Pol II pre-initiation complex (PIC), in which Pol II core assembles with general transcription factors and other specific initiation factors including GTF2E1, GTF2E2, GTF2F1, GTF2F2, TCEA1, ERCC2, ERCC3, GTF2H2, GTF2H3, GTF2H4, GTF2H5, GTF2A1, GTF2A2, GTF2B and TBP; this large multi-subunit PIC complex mediates DNA unwinding and targets Pol II core to the transcription start site where the first phosphodiester bond forms. Pol III complex consists of a ten-subunit catalytic core composed of POLR3A/RPC1, POLR3B/RPC2, POLR1C/RPAC1, POLR1D/RPAC2, POLR3K/RPC10, POLR2E/RPABC1, POLR2F/RPABC2, POLR2H/RPABC3, POLR2K/RPABC4 and POLR2L/RPABC5; a mobile stalk composed of two subunits POLR3H/RPC8 and CRCP/RPC9, protruding from the core and functioning primarily in transcription initiation; and additional subunits homologous to general transcription factors of the RNA polymerase II machinery, POLR3C/RPC3-POLR3F/RPC6-POLR3G/RPC7 heterotrimer required for transcription initiation and POLR3D/RPC4-POLR3E/RPC5 heterodimer involved in both transcription initiation and termination.

It is found in the nucleus. The protein resides in the nucleolus. Its function is as follows. DNA-dependent RNA polymerase catalyzes the transcription of DNA into RNA using the four ribonucleoside triphosphates as substrates. Common component of RNA polymerases I, II and III which synthesize ribosomal RNA precursors, mRNA precursors and many functional non-coding RNAs, and a small RNAs, such as 5S rRNA and tRNAs, respectively. The sequence is that of DNA-directed RNA polymerases I, II, and III subunit RPABC4 (Polr2k) from Mus musculus (Mouse).